The sequence spans 147 residues: Large ribosomal subunit protein uL13 (147 aa).

It belongs to the universal ribosomal protein uL13 family. As to quaternary structure, part of the 50S ribosomal subunit.

This protein is one of the early assembly proteins of the 50S ribosomal subunit, although it is not seen to bind rRNA by itself. It is important during the early stages of 50S assembly. This is Large ribosomal subunit protein uL13 from Streptomyces avermitilis (strain ATCC 31267 / DSM 46492 / JCM 5070 / NBRC 14893 / NCIMB 12804 / NRRL 8165 / MA-4680).